The sequence spans 341 residues: tRNA N6-adenosine threonylcarbamoyltransferase (341 aa).

The Fe cation site is built by His-111 and His-115. Residues 134 to 138, Asp-167, Gly-180, and Asn-272 contribute to the substrate site; that span reads LVSGG. Residue Asp-300 participates in Fe cation binding.

This sequence belongs to the KAE1 / TsaD family. Fe(2+) serves as cofactor.

It localises to the cytoplasm. It carries out the reaction L-threonylcarbamoyladenylate + adenosine(37) in tRNA = N(6)-L-threonylcarbamoyladenosine(37) in tRNA + AMP + H(+). Required for the formation of a threonylcarbamoyl group on adenosine at position 37 (t(6)A37) in tRNAs that read codons beginning with adenine. Is involved in the transfer of the threonylcarbamoyl moiety of threonylcarbamoyl-AMP (TC-AMP) to the N6 group of A37, together with TsaE and TsaB. TsaD likely plays a direct catalytic role in this reaction. The sequence is that of tRNA N6-adenosine threonylcarbamoyltransferase from Blochmanniella pennsylvanica (strain BPEN).